The sequence spans 415 residues: Acetylornithine aminotransferase (415 aa).

Pyridoxal 5'-phosphate-binding positions include 115–116 and Phe-148; that span reads GA. Arg-151 serves as a coordination point for N(2)-acetyl-L-ornithine. Residue 239–242 participates in pyridoxal 5'-phosphate binding; the sequence is DEVQ. Lys-268 bears the N6-(pyridoxal phosphate)lysine mark. Ser-295 is a binding site for N(2)-acetyl-L-ornithine. A pyridoxal 5'-phosphate-binding site is contributed by Thr-296.

It belongs to the class-III pyridoxal-phosphate-dependent aminotransferase family. ArgD subfamily. In terms of assembly, homodimer. The cofactor is pyridoxal 5'-phosphate.

It is found in the cytoplasm. The enzyme catalyses N(2)-acetyl-L-ornithine + 2-oxoglutarate = N-acetyl-L-glutamate 5-semialdehyde + L-glutamate. The protein operates within amino-acid biosynthesis; L-arginine biosynthesis; N(2)-acetyl-L-ornithine from L-glutamate: step 4/4. This chain is Acetylornithine aminotransferase, found in Prochlorococcus marinus subsp. pastoris (strain CCMP1986 / NIES-2087 / MED4).